Consider the following 441-residue polypeptide: Transcriptional regulatory protein ZraR (441 aa).

The 115-residue stretch at 7–121 folds into the Response regulatory domain; the sequence is DILVVDDDVS…RLQETLEKAL (115 aa). Aspartate 56 carries the post-translational modification 4-aspartylphosphate. The region spanning 141 to 370 is the Sigma-54 factor interaction domain; the sequence is MIGSSPAMQH…LENAIERAVV (230 aa). Residues glycine 172, threonine 173, arginine 329, and arginine 359 each contribute to the ATP site. A DNA-binding region (H-T-H motif) is located at residues 421–440; it reads KTEAARQLGITRKTLLAKLS.

Post-translationally, phosphorylated by ZraS.

The protein resides in the cytoplasm. Activity of the ZraS/ZraR two-component system is repressed by the zinc-bound form of ZraP, which probably interacts with the periplasmic region of ZraS. Part of the Zra signaling pathway, an envelope stress response (ESR) system composed of the periplasmic accessory protein ZraP, the histidine kinase ZraS and the transcriptional regulator ZraR. The ZraPSR system contributes to antibiotic resistance and is important for membrane integrity in the presence of membrane-targeting biocides. ZraR is a member of the two-component regulatory system ZraS/ZraR. When activated by ZraS, acts in conjunction with sigma-54 to regulate the expression of zraP in the presence of high Zn(2+) or Pb(2+) concentrations. Also positively autoregulates the expression of the zraSR operon. The protein is Transcriptional regulatory protein ZraR (zraR) of Salmonella typhi.